The chain runs to 563 residues: Urocanate hydratase (563 aa).

Residues 53–54 (GG), glutamine 131, 177–179 (GMG), glutamate 197, arginine 202, 243–244 (NA), 264–268 (QTSAH), 274–275 (YL), and tyrosine 323 each bind NAD(+). Cysteine 411 is an active-site residue. An NAD(+)-binding site is contributed by glycine 493.

This sequence belongs to the urocanase family. Requires NAD(+) as cofactor.

Its subcellular location is the cytoplasm. The enzyme catalyses 4-imidazolone-5-propanoate = trans-urocanate + H2O. Its pathway is amino-acid degradation; L-histidine degradation into L-glutamate; N-formimidoyl-L-glutamate from L-histidine: step 2/3. Functionally, catalyzes the conversion of urocanate to 4-imidazolone-5-propionate. This Yersinia enterocolitica serotype O:8 / biotype 1B (strain NCTC 13174 / 8081) protein is Urocanate hydratase.